Consider the following 191-residue polypeptide: UPF0228 protein MM_1428 (191 aa).

Belongs to the UPF0228 family.

The chain is UPF0228 protein MM_1428 from Methanosarcina mazei (strain ATCC BAA-159 / DSM 3647 / Goe1 / Go1 / JCM 11833 / OCM 88) (Methanosarcina frisia).